Reading from the N-terminus, the 218-residue chain is Oocyte-specific homeobox protein 7 (218 aa).

The span at 40–72 (SPLVTPGSTMQSSLSVPERNLLQQESEGPSRQS) shows a compositional bias: polar residues. Residues 40 to 77 (SPLVTPGSTMQSSLSVPERNLLQQESEGPSRQSGCMPL) form a disordered region. A DNA-binding region (homeobox) is located at residues 94–153 (FRKERIVYSKEQQRLLQKHFDECQYPKEKKIVELAVLIGVTKMEIKKWFKNNRAKYRQMN).

This sequence belongs to the paired homeobox family. Obox subfamily. Specifically expressed in oocytes and early embryos.

Its subcellular location is the nucleus. Transcription factor required for zygotic genome activation (ZGA), a critical event in early embryonic development during which the developmental control passes from maternally provided mRNAs to the expression of the zygotic genome after fertilization. Together with other Obox family members, required in early two-cell stage embryos to kick-start the major ZGA wave by facilitating RNA Polymerase II 'pre-configuration', during which RNA Polymerase II relocates from the initial one-cell stage binding targets to ZGA gene promoters and distal enhancers. Mechanistically, promotes recruitment of RNA Polymerase II from (CG-rich) non-ZGA genes to (CG-poor) ZGA genes at the two-cell stage. Binds to regulatory DNA sequences containing a 5'-ACNCCTTTAATCCCAG-3' sequence motif. Most maternal and zygotic Obox family proteins can compensate for one another. In Mus musculus (Mouse), this protein is Oocyte-specific homeobox protein 7.